The sequence spans 98 residues: DNA-directed RNA polymerase subunit omega (98 aa).

It belongs to the RNA polymerase subunit omega family. In terms of assembly, the RNAP catalytic core consists of 2 alpha, 1 beta, 1 beta' and 1 omega subunit. When a sigma factor is associated with the core the holoenzyme is formed, which can initiate transcription.

The catalysed reaction is RNA(n) + a ribonucleoside 5'-triphosphate = RNA(n+1) + diphosphate. Functionally, promotes RNA polymerase assembly. Latches the N- and C-terminal regions of the beta' subunit thereby facilitating its interaction with the beta and alpha subunits. This Xylella fastidiosa (strain M12) protein is DNA-directed RNA polymerase subunit omega.